The following is a 453-amino-acid chain: Ribulose bisphosphate carboxylase large chain (453 aa).

A propeptide spanning residues 1–2 is cleaved from the precursor; that stretch reads MS. Pro3 carries the post-translational modification N-acetylproline. Lys14 is subject to N6,N6,N6-trimethyllysine. Substrate-binding residues include Asn123 and Thr173. Lys175 functions as the Proton acceptor in the catalytic mechanism. Position 177 (Lys177) interacts with substrate. Mg(2+) is bound by residues Lys201, Asp203, and Glu204. Lys201 carries the N6-carboxylysine modification. His294 serves as the catalytic Proton acceptor. Positions 295, 327, and 379 each coordinate substrate.

This sequence belongs to the RuBisCO large chain family. Type I subfamily. Heterohexadecamer of 8 large chains and 8 small chains; disulfide-linked. The disulfide link is formed within the large subunit homodimers. Mg(2+) serves as cofactor. In terms of processing, the disulfide bond which can form in the large chain dimeric partners within the hexadecamer appears to be associated with oxidative stress and protein turnover.

It localises to the plastid. It is found in the chloroplast. The enzyme catalyses 2 (2R)-3-phosphoglycerate + 2 H(+) = D-ribulose 1,5-bisphosphate + CO2 + H2O. The catalysed reaction is D-ribulose 1,5-bisphosphate + O2 = 2-phosphoglycolate + (2R)-3-phosphoglycerate + 2 H(+). Its function is as follows. RuBisCO catalyzes two reactions: the carboxylation of D-ribulose 1,5-bisphosphate, the primary event in carbon dioxide fixation, as well as the oxidative fragmentation of the pentose substrate in the photorespiration process. Both reactions occur simultaneously and in competition at the same active site. This is Ribulose bisphosphate carboxylase large chain from Galium album (White bedstraw).